Reading from the N-terminus, the 378-residue chain is UPF0725 protein At1g23970 (378 aa).

This sequence belongs to the UPF0725 (EMB2204) family.

This Arabidopsis thaliana (Mouse-ear cress) protein is UPF0725 protein At1g23970.